A 574-amino-acid chain; its full sequence is Putative DNA-directed RNA polymerase subunit alpha-like 1 (574 aa).

The tract at residues 1 to 352 is alpha N-terminal domain (alpha-NTD); the sequence is MTNNKNFADW…ELFSLFLQTS (352 aa). The tract at residues 419–574 is alpha C-terminal domain (alpha-CTD); sequence PDYDRYNSIT…RERKRGNREF (156 aa). A disordered region spans residues 534–574; sequence QETLRKEQDEQSSQQQKDQMEKRRWERQNRERERKRGNREF. Basic and acidic residues predominate over residues 551 to 574; sequence DQMEKRRWERQNRERERKRGNREF.

The protein belongs to the RNA polymerase alpha chain family. As to quaternary structure, in plastids the minimal PEP RNA polymerase catalytic core is composed of four subunits: alpha, beta, beta', and beta''. When a (nuclear-encoded) sigma factor is associated with the core the holoenzyme is formed, which can initiate transcription.

It is found in the plastid. The protein resides in the chloroplast. The enzyme catalyses RNA(n) + a ribonucleoside 5'-triphosphate = RNA(n+1) + diphosphate. In terms of biological role, DNA-dependent RNA polymerase catalyzes the transcription of DNA into RNA using the four ribonucleoside triphosphates as substrates. This is Putative DNA-directed RNA polymerase subunit alpha-like 1 (rpoAL1-A) from Pelargonium hortorum (Common geranium).